The primary structure comprises 221 residues: Ribosomal RNA small subunit methyltransferase G (221 aa).

S-adenosyl-L-methionine is bound by residues glycine 85, phenylalanine 90, alanine 136–glutamate 137, and arginine 149.

This sequence belongs to the methyltransferase superfamily. RNA methyltransferase RsmG family.

Its subcellular location is the cytoplasm. Its function is as follows. Specifically methylates the N7 position of a guanine in 16S rRNA. This is Ribosomal RNA small subunit methyltransferase G from Porphyromonas gingivalis (strain ATCC BAA-308 / W83).